Here is an 887-residue protein sequence, read N- to C-terminus: Protein PTHB1 (887 aa).

The interval 1–407 (MSLFKARDWW…SQGVWPMTER (407 aa)) is seven-bladed beta-propeller. Positions 685-765 (KDKTPAPLQH…FLPLQEDTQE (81 aa)) are interaction with LZTL1. Residues 850-887 (DLEERSVEQDSTELFTNHRHLTAETPRPEVSPLQGVSE) form a disordered region.

As to quaternary structure, part of BBSome complex, that contains BBS1, BBS2, BBS4, BBS5, BBS7, BBS8/TTC8, BBS9 and BBIP10. Interacts with LZTL1; the interaction mediates the association of LZTL1 with the BBsome complex and regulates BBSome ciliary trafficking. In terms of tissue distribution, widely expressed. Expressed in adult heart, skeletal muscle, lung, liver, kidney, placenta and brain, and in fetal kidney, lung, liver and brain.

Its subcellular location is the cytoplasm. It localises to the cytoskeleton. It is found in the microtubule organizing center. The protein localises to the centrosome. The protein resides in the cell projection. Its subcellular location is the cilium membrane. It localises to the centriolar satellite. The BBSome complex is thought to function as a coat complex required for sorting of specific membrane proteins to the primary cilia. The BBSome complex is required for ciliogenesis but is dispensable for centriolar satellite function. This ciliogenic function is mediated in part by the Rab8 GDP/GTP exchange factor, which localizes to the basal body and contacts the BBSome. Rab8(GTP) enters the primary cilium and promotes extension of the ciliary membrane. Firstly the BBSome associates with the ciliary membrane and binds to RAB3IP/Rabin8, the guanosyl exchange factor (GEF) for Rab8 and then the Rab8-GTP localizes to the cilium and promotes docking and fusion of carrier vesicles to the base of the ciliary membrane. Required for proper BBSome complex assembly and its ciliary localization. The polypeptide is Protein PTHB1 (BBS9) (Homo sapiens (Human)).